Consider the following 400-residue polypeptide: MVESSRWYSVPETLSAKAGLPIVSLPFNNQIQTSPFSVRSSYYLPLQTVNMSPSLVAPRQKALSLRHPTMAGKEYLEEFSKKYIIDVLDVPNREEWLKQLPKKVAKDGPYSALIIGMGTGPYEPFDAEFCQALLPDLKLVVSASAGYNEFDVSWMTENNIWFCNTVDAVSEATADMAIFLTLAALRDTTNAERSARAGNWKAGFVPCRDPTGLRLGIIGMGAIGKHIARKAAVFNLEIVYHNRKRLQEADETTYKATYCPTLASLLETSDIVSISVPLNDETTGMISESEIALMKDSSILINTARGAVVDEAALIEALESGKIWRAGLDVFCNEPDINPYFKTSDKVVVQPHLGGLTAVAFRKAYRECFENVASFFDTGKPLAPVNDVTRAKGTPTASLP.

NAD(+) is bound by residues 222–223 (AI), 303–305 (TAR), and Asp329. Arg305 is an active-site residue. Glu334 is a catalytic residue. His352 serves as the catalytic Proton donor. NAD(+) is bound at residue 352–355 (HLGG).

It belongs to the D-isomer specific 2-hydroxyacid dehydrogenase family.

The protein operates within secondary metabolite biosynthesis; terpenoid biosynthesis. In terms of biological role, dehydrogenase; part of the gene cluster that mediates the biosynthesis of enfumafungin, a glycosylated fernene-type triterpenoid with potent antifungal activity, mediated by its interaction with beta-1,3-glucan synthase and the fungal cell wall. The pathway begins with the terpene cyclase-glycosyl transferase fusion protein that most likely uses 2,3-oxidosqualene as substrate and catalyzes glycosylation immediately after cyclization. The fernene glycoside then could be processed by the desaturase efuI which catalyzes isomerization of a double bond established by efuA to form the core structure. The latter would then undergo a series of hydroxylations in unknown order at C-2, C-19, C-23 and C-25, which would be catalyzed by two of the three cytochrome P450 monooxygenases efuB, efuG or efuH. The hydroxy-group at C-25 becomes oxidized by the dehydrogenase efuE to enable a spontaneous, non-enzymatic hemiacetal formation with C-23. After hydroxylation at C-2, acetylation by the acetyltransferase efuC takes place. The final steps in enfumafungin biosynthesis require expansion of the 5-membered ring by lactonization via a Baeyer-Villiger reaction mediated by one of the BGC's cytochrome P450 monooxygenases (efuB, efuG or efuH) followed by ring cleavage. This type of reaction would establish a double bond between C-20 and C-21 which could be reduced by the reductase efuL to form the final product. In Hormonema carpetanum, this protein is Dehydrogenase efuE.